The chain runs to 624 residues: Chaperone protein HtpG (624 aa).

The a; substrate-binding stretch occupies residues 1–336 (MKGQETRGFQ…SSDLPLNVSR (336 aa)). The interval 337–552 (EILQDSTVTR…ADEMSTQMAK (216 aa)) is b. Positions 553-624 (LFAAAGQKVP…IRRMNQLLVS (72 aa)) are c.

It belongs to the heat shock protein 90 family. Homodimer.

The protein resides in the cytoplasm. Molecular chaperone. Has ATPase activity. The polypeptide is Chaperone protein HtpG (Shigella boydii serotype 4 (strain Sb227)).